Consider the following 103-residue polypeptide: Large ribosomal subunit protein uL24 (103 aa).

Belongs to the universal ribosomal protein uL24 family. Part of the 50S ribosomal subunit.

One of two assembly initiator proteins, it binds directly to the 5'-end of the 23S rRNA, where it nucleates assembly of the 50S subunit. Functionally, one of the proteins that surrounds the polypeptide exit tunnel on the outside of the subunit. In Dehalococcoides mccartyi (strain ATCC BAA-2266 / KCTC 15142 / 195) (Dehalococcoides ethenogenes (strain 195)), this protein is Large ribosomal subunit protein uL24.